Consider the following 164-residue polypeptide: Ecotin (164 aa).

The first 20 residues, 1–20 (MKMFVPAVVFAALASASAWA), serve as a signal peptide directing secretion. A disulfide bond links Cys-72 and Cys-109.

It belongs to the protease inhibitor I11 (ecotin) family. Homodimer.

Its subcellular location is the periplasm. General inhibitor of pancreatic serine proteases: inhibits chymotrypsin, trypsin, elastases, factor X, kallikrein as well as a variety of other proteases. In Salmonella typhi, this protein is Ecotin.